Consider the following 533-residue polypeptide: Spindle pole body protein CSA6 (533 aa).

Disordered regions lie at residues 1–32 (MEDS…SDLT) and 53–130 (DKYD…QEDE). Composition is skewed to basic and acidic residues over residues 18–30 (PEIK…KTSD) and 53–68 (DKYD…DLTP). A compositionally biased stretch (low complexity) spans 83-94 (PSKFSSSIPQKP). Residues 103 to 121 (SSPTKNYTDHINQLRSGPN) are compositionally biased toward polar residues. The stretch at 136-236 (KYEIKRLKQE…RSERDELVKD (101 aa)) forms a coiled coil. The segment covering 309-318 (EKDKPSEDKT) has biased composition (basic and acidic residues). Disordered stretches follow at residues 309-329 (EKDK…SKDA) and 349-453 (SANS…QSTK). Composition is skewed to polar residues over residues 349–392 (SANS…SNSQ) and 405–421 (IYSS…QSSH). Basic and acidic residues predominate over residues 432–445 (PRVERDHWTDRPPS).

The protein localises to the cytoplasm. The protein resides in the cytoskeleton. It is found in the microtubule organizing center. Its subcellular location is the spindle pole body. In terms of biological role, plays a role in mitotic spindle pole body organization, possibly at the point of spindle pole body separation. Required for mitotic exit. This is Spindle pole body protein CSA6 from Candida dubliniensis (strain CD36 / ATCC MYA-646 / CBS 7987 / NCPF 3949 / NRRL Y-17841) (Yeast).